The sequence spans 2344 residues: MAAMSRLTGMTTAILPEKKPLNFFLDLRDKTPPCCIRATGKLAWPVFLGQNGKEGPLETCNKCGKWLNGFGCFGLEDLGDVCLCSIAQQKHKFGPVCLCNRAYIHDCGRWRRRSRFLKHYKALNKVIPCAYQFDESFSTPVFEGEVDDLFVELGAPTSMGFMDKKLLKKGKKLMDKFVDVDEPCLTSRDASLLDSIASDNTIRAKLEEEYGVEMVQAARDRKDFMKNLRLALDNRPANPVTWYTKLGNITEKGKQWAKKVVYGACKVTDPLKTLASILLVGLHNVIAVDTTVMLSTFKPVNLLAILMDWTNDLTGFVTTLVRLLELYGVVQATVNLIVEGVKSFWDKVVCATDRCFDLLKRLFDTFEDSVPTGPTAGCLIFMAFVFSTVVGYLPNNSVITTFMKGAGKLTTFAGVIGAIRTLWITINQHMVAKDLTSIQQKVMTVVKMANEAATLDQLEIVSCLCSDLENTLTNRCTLPSYNQHLGILNASQKVISDLHTMVLGKINMTKQRPQPVAVIFKGAPGIGKTYLVHRIARDLGCQHPSTINFGLDHFDSYTGEEVAIADEFNTCGDGESWVELFIQMVNTNPCPLNCDKAENKNKVFNSKYLLCTTNSNMILNATHPRAGAFYRRVMIVEARNKAVESWQATRHGSKPGRSCYSKDMSHLTFQVYPHNMPAPGFVFVGDKLVKSQVAPREYKYSELLDLIKSEHPDVASFEGANRFNFVYPDAQYDQALLMWKQYFVMYGCVARLAKNFVDDIPYNQVHISRASDPKIEGCVEYQCKFQHLWRMVPQFVLGCVNMTNQLGTPLTQQQLDRITNGVEGVTVTTVNNILPFHSQTTLINPSFIKLIWAVRKHLKGLSGVTKVAQFIWRVMTNPVDAYGSLVRTLTGAATFSDDPVSTTIICSNCTIQIHSCGGLLVRYSRDPVPVASDNVDRGDQGVDVFTDPNLISGFSWRQIAHLFVEVISHLCANHLVNLATMAALGAVATKAFQGVKGKTKRGRGARVNLGNDEYDEWQAARREFVNAHDMTAEEYLAMKNKAAMGSDDQDSVMFRSWWTRRQLRPDEDQVTVVGRGGVRNEVIRTRVRQTPKGPKTLDDGGFYDNDYEGLPGFMRHNGSGWMIHIGNGLYISNTHTARSSCSEVVTCSPTTDLCLVKGEAIRSVAQIAEGTPVCDWKKSPISTYGIKKTLSDSTKIDVLAYDGCTQTTHGDCGLPLYDSSGKIVAIHTGKLLGFSKMCTLIDLTITKGVYETSNFFCGEPIDYRGITAHRLVGAEPRPPVSGTRYAKVPGVPEEYKTGYRPANLGRSDPDSDKSLMNIAVKNLQVYQQEPKLDKVDEFIERAAADVLGYLRFLTKGERQANLNFKAAFNTLDLSTSCGPFVPGKKIDHVKDGVMDQVHAKHLYKCWSVANSGKALHHIYACGLKDELRPLDKVKEGKKRLLWGCDVGVAVCAAAVFHNICYKLKMVARFGPIAVGVDMTSRDVDVIINNLTSKASDFLCLDYSKWDSTMSPCVVRLAIDILADCCEQTELTKSVVLTLKSHPMTILDAMIVQTKRGLPSGMPFTSVINSICHWLLWSAAVYKSCAEIGLHCSNLYEDAPFYTYGDDGVYAMTPMMVSLLPAIIENLRDYGLSPTAADKTEFIDVCPLNKISFLKRTFELTDIGWVSKLDKSSILRQLEWSKTTSRHMMIEETYDLAKEERGVQLEELQVAAAAHGQEFFNFVCKELERQQAYTQFSVYSYDAARKILADRKRVVSVVPDDEFVNVMEGKARTAPQGEAAGTATTASVPGTTTDGMDPGVVATTSVVTAENSSASIATAGIGGPPQQVDQQETWRTNFYYNDVFTWSVADAPGSILYTVQHSPQNNPFTAVLSQMYAGWAGGMQFRFIVAGSGVFGGRLVAAVIPPGIEIGPGLEVRQFPHVVIDARSLEPVTITMPDLRPNMYHPTGDPGLVPTLVLSVYNNLINPFGGSTSAIQVTVETRPSEDFEFVMIRAPSSKTVDSISPAGLLTTPVLTGVGNDNRWNGQIVGLQPVPGGFSTCNRHWNLNGSTYGWSSPRFADIDHRRGSASYPGNNATNVLQFWYANAGSAIDNPISQVAPDGFPDMSFVPFNGPGIPAAGWVGFGAIWNSNSGAPNVTTVQAYELGFATGAPGNLQPTTNTSGSQTVAKSIYAVVTGTAQNPAGLFVMASGVISTPSANAITYTPQPDRIVTTPGTPAAAPVGKNTPIMFASVVRRTGDVNATAGSANGTQYGTGSQPLPVTIGLSLNNYSSALMPGQFFVWQLTFASGFMEIGLSVDGYFYAGTGASTTLIDLTELIDVRPVGPRPSKSTLVFNLGGTANGFSYV.

In terms of domain architecture, SF3 helicase spans 492–653 (QKVISDLHTM…ESWQATRHGS (162 aa)). 522-529 (GAPGIGKT) is an ATP binding site. At Tyr-1014 the chain carries O-(5'-phospho-RNA)-tyrosine. Tyr-1014 carries the post-translational modification O-UMP-tyrosine; transient. The region spanning 1109–1244 (GLPGFMRHNG…SKMCTLIDLT (136 aa)) is the Peptidase C24 domain. Residues His-1135, Asp-1152, and Cys-1212 each act as for 3CLpro activity in the active site. Positions 1495–1619 (SDFLCLDYSK…AMTPMMVSLL (125 aa)) constitute a RdRp catalytic domain. Cys-1584 and Cys-1591 are disulfide-bonded. Positions 1771-1796 (RTAPQGEAAGTATTASVPGTTTDGMD) are disordered. A compositionally biased stretch (low complexity) spans 1778–1794 (AAGTATTASVPGTTTDG).

Homodimer. In terms of assembly, homomultimer. Interacts with host type II histo-blood group structures antigens at the surface of target cells. It depends on Mn(2+) as a cofactor. In terms of processing, specific enzymatic cleavages by its own cysteine protease yield mature proteins. The protease cleaves itself from the nascent polyprotein autocatalytically. Precursor p41 can be cleaved by viral 3CLpro into protein p19 and VPg, or cleaved by host protease into protein p23/2 and protein p18. Post-translationally, VPg is uridylylated by the polymerase and is covalently attached to the 5'-end of the polyadenylated genomic and subgenomic RNAs. This uridylylated form acts as a nucleotide-peptide primer for the polymerase.

The protein localises to the host cytoplasm. The protein resides in the host endoplasmic reticulum. It is found in the virion. The enzyme catalyses a ribonucleoside 5'-triphosphate + H2O = a ribonucleoside 5'-diphosphate + phosphate + H(+). The catalysed reaction is Endopeptidase with a preference for cleavage when the P1 position is occupied by Glu-|-Xaa and the P1' position is occupied by Gly-|-Yaa.. It carries out the reaction RNA(n) + a ribonucleoside 5'-triphosphate = RNA(n+1) + diphosphate. Functionally, together with NTPase and NS4, initiates the formation of the replication complex. Induces the proliferation of the host smooth ER membranes forming long tubular structures. These remodeled membranes probably form the viral factories that contain the replication complex. Its function is as follows. Displays NTPase activity, but no helicase activity. Induces the formation of convoluted membranes derived from the host ER. These remodeled membranes probably form the viral factories that contain the replication complex. Together with NS2 and NS4, initiates the formation of the replication complex. In terms of biological role, probable key protein responsible for the formation of membrane alterations by the virus. Induces the formation of convoluted membranes derived from the host ER. These remodeled membranes probably form the viral factories that contain the replication complex. Together with NS2 and NTPase, initiates the formation of the replication complex. Viral genome-linked protein is covalently linked to the 5'-end of the positive-strand, negative-strand genomic RNAs and subgenomic RNA. Acts as a genome-linked replication primer. May recruit ribosome to viral RNA thereby promoting viral proteins translation. Interacts with host translation initiation complex to allow the translation of viral proteins. Functionally, processes the polyprotein. 3CLpro-RdRp is first released by autocleavage, then all other proteins are cleaved. May cleave polyadenylate-binding protein thereby inhibiting cellular translation. Its function is as follows. Replicates genomic and antigenomic RNA by recognizing replications specific signals. Also transcribes a subgenomic mRNA by initiating RNA synthesis internally on antigenomic RNA. This sgRNA codes for structural proteins. Catalyzes the covalent attachment VPg with viral RNAs. In terms of biological role, capsid protein VP60 self assembles to form an icosahedral capsid with a T=3 symmetry, about 35 nm in diameter, and consisting of 180 capsid proteins. A smaller form of capsid with a diameter of 23 nm might be capsid proteins assembled as icosahedron with T=1 symmetry. The capsid encapsulate VP2 proteins and genomic or subgenomic RNA. Attaches virion to target cells by binding histo-blood group antigens, inducing endocytosis of the viral particle. Acidification of the endosome induces conformational change of capsid protein thereby injecting virus genomic RNA into host cytoplasm. The polypeptide is Genome polyprotein (Oryctolagus cuniculus (Rabbit)).